A 139-amino-acid polypeptide reads, in one-letter code: Small ribosomal subunit protein uS12m (139 aa).

The transit peptide at 1-29 (MSWSGPLRGLNTSLTCGPALVPRLWATCS) directs the protein to the mitochondrion. The interval 36–56 (MHRLGGPPKRPPQKLGPTEGR) is disordered.

The protein belongs to the universal ribosomal protein uS12 family. As to quaternary structure, component of the mitochondrial ribosome small subunit (28S) which comprises a 12S rRNA and about 30 distinct proteins.

It is found in the mitochondrion. The sequence is that of Small ribosomal subunit protein uS12m (MRPS12) from Pongo abelii (Sumatran orangutan).